The chain runs to 5376 residues: MALPVWTLMLLVGAAWGQEQVPAWRPNSPDLGPMVHTSREDSILSKCDFEDNSRPFCDWSQMSADDGDWIRTTGPSLTGTSGPPGGYPNGEGYYLHMDPKTFPQGGVARLRSPDIWEQGPLCVHFAFHMFGLSWGAQLRLLLLRGRKHLRPYVLWKHVNTQSPSWMPTTVTVPADHDIPSWLMFEGMRGNTAYLDISLDGLSIQRGTCNQVCMSQMCTFDTLNDLCGWSWVPTATGAKWTQKKGPTGKQGVGPAEDFSNPGNGYYMLLDSTNARPGQKAVLLSPLSHSRGCMTLSFHYIMHGQGHEEGLFVYATFLGNIRKYTLFSGHPGPDWQAVSVNYTGQGQIQFMVVGMFGNIPEPAIAVDAISIAPCGESFPQCDFEDRVHPFCDWNQVYGDMGHWSWGSKSVPTLIAGSPREFPYGGEHYIFFDSVKLSQEGQSARLVSPPFCAPGGICVEFAYHMYGLGKGTTLKLLLGSPAGSSPIPLWNRVGSQSSGWMNSSVTIPKGYQQPMQLFIEATRGTSTAFVVALNFILISHGPCRVLLQTEIPSSPLLPPTGPSESTVPTLPMEQPTSPTKATTVTIEIPTTPTEEATIPTETTTVPTEVINVSPKETSIPPEVTIPTEVITVSPEEIISPTEVTPVPTDVTAAYVEATNASPEETSVPPEVTILTEVTTVSPEETTVPTEVPIVLIEATAFPTGETTLYTEVPTVPTEVTGVHTEVTNVSPEETSVPTEETISTEVTTVSPEETTVPTEVPIVLIEATASPTGEITLYTEVPTVPTEVTGVHTEVTNVSPEETSVPTEETISTEVTTVSPEETTLPTEVPTVSTEVTNVSPEETSVPPEETILTTLYTEVPTVPTEVTGVHTEVTNVSPEETSVPTEETISTEVTTVSPEETTLPTEVPTVSTEVTNVSPEETSVPPEETILTEITTVSPEETVFPIEGTTLPTEVLTVPIEVTTFPTGETTVPTEVPTVSTEMTGVHTEVTTVFPEETSIPTEVATVLPASIPPEETTTPTEVTTTPPEETTIPAEVTTVPPASIPPEETASLTEVTTTPPEETTTPTEVTTVPPEKTTIPTEVTTVPPASIFPEETTVPPEETTIASEETTVSTQETTLLTEQSAVTQTSIACRPPCPSPPLMPIGPLLSKPPGVSMFSLAPTTGVSTTESCPPNAHIELCACPASCESPKPSCQPPCIPGCVCNPGFLFSNNQCINESSCNCPYNNKHYKPGEEWFTPNCTERCRCLPGSLMECQISQCGTHTVCQLKSDQYQCEPYGKATCLVYGDLHFVTFDERHIGFTGTCTYILTQTCSNSTDHFFRITANTEERGVEGVSCLDKVVISLPETTVTMISGRHTLIGDQEVTLPAILSDDTYVGLSGRFVELRTTFGLRVRWDGDQQLFVTVSSTFSGKLCGFCGNYDGDSSNDNLKSDGMMTHDEEELRLSWQVEEDEDKDWVSSRCQKKKNPPSCDAALGSTMSGPKLCGQLVNPSGPFEACLLHLKASSFLDNCVTDMCSFQGLQQKLCARMSAMTATCQDAGYPVKPWREPQFCPLVCPKNSRYSLCAKPCPETCHPISTTQHCSDKCVEGCECDPGFILSGSECVPSSQCGCTSFQGRYFKLQEQWFNPDCKEICTCESHNHILCKPWKCKAQEACSYKNGVLGCHAQGAATCMVSGDPHYLTFDGALHHFMGTCTYVLTQPCWSKSQENNFVVSATNEIHDGNLEVSYVKAVHVQVFDLKISMFKGQKVVLNNQRVVLPVWPSQGRVTIRLSGIFVLLYTNFGLQVRYDGRHLVEVTVPSSYTGSLCGLCGNYNNNSMDDNLRADMKPAGNSLLLGAAWKILEASDPGCFLAGGKPSRCADSDMDDVWTKKCAILMNPLGPFSNCHEAVPPQASFSSCVYGQCETNGDNLTFCHSLQAYASLCAQAGQVTTWRNSTFCPMRCPPRSSYNPCANSCPATCLTLSTPRDCPTLPCVEGCECQSGHILSGTTCVPLRQCGCSDQDGSYHLLGESWYTEKTCTTLCTCSAHSNITCSPTACKANHVCLRQEGLLRCAAEMGECRISEDSQIVSFDDHSHPIQDTCTYILVKVCHPNTNMPFFMISAKTDINTNGKNKTFGVYQLYIDIFNFHITLQKDHLVLISLINDSIVTLPTTTHIPGVSVMTEDVYTIVTIKDEIQVKFESNNFLDVKIPASSNGKVCGVCGNFNGEEEDELMTPSGELAEDEQEFMNSWKDKSMDPNCQKIEGQNLQVEQQEIMNGKCRPIDFEKAQANCQTALQGPAWAHCSSRVPIKPFLLKCMNSFCEFRELFRALCDSLQSFEDACQNQGLKPPIWRNSSFCPLECPAHSHYTNCLPSCPPSCLDPDSRCEGSGHKVPATCREGCICQPDYVLLNDKCVLRSHCGCKDAQGVFIPAGKTWISEDCTQSCTCMKGSMRCWDFQCPPGTYCKNSNDGSSNCVKISLQCPAHSKFTDCLPPCHPSCSDPDGHCEGISTNAHSNCKEGCVCQPGYVLRNDKCVLRIECGCQHTQGGFIPAGKNWTSRGCSQSCDCMEGVIRCQNFQCPSGTYCQDIEDGTSNCANITLQCPAHSSFTNCLPPCQPSCSDPEGHCGGSTTKAPSACQEGCVCEPDYVVLNNKCVPRIECGCKDAQGVLIPADKIWINKGCTQTCACVTGTIHCRDFQCPSGTYCKDIKDDASNCTEIILQCPDHSLYTHCLPSCLLSCSDPDGLCRGTSPEAPSTCKEGCVCDPDYVLSNDKCVLRIECGCKDAQGVLIPAGKTWINRGCTQSCSCMGGAIQCQNFKCPSEAYCQDMEDGNSNCTSIPLQCPAHSHYTNCLPTCQPSCSDPDGHCEGSSTKAPSACKEGCVCEPDYVMLNNKCVPRIECGCKDTQGVLIPADKTWINRGCTQSCTCRGGAIQCQKYHCSSGTYCKDMEDDSSSCATITLQCPAHSHFTNCLPPCQPSCLDSEGHCEGSTTKAPSACQEGCVCEPDYVVLNNKCVPRIECGCKDAQGVLIPADKTWINRGCTQSCTCKGGAIQCQKFQCPSETYCKDIEDGNSNCTRISLQCPANSNFTSCLPSCQPSCSNTDVHCEGSSPNTLSSCREGCVCQSGYVLHNDKCILRNQCGCKDAQGALIPEGKTWITSGCTQSCNCTGGAIQCQNFQCPLKTYCKDLKDGSSNCTNIPLQCPAHSRYTNCLPSCPPLCLDPEGLCEGTSPKVPSTCREGCICQPGYLMHKNKCVLRIFCGCKNTQGAFISADKTWISRGCTQSCTCPAGAIHCRNFKCPSGTYCKNGDNGSSNCTEITLQCPTNSQFTDCLPSCVPSCSNRCEVTSPSVPSSCREGCLCNHGFVFSEDKCVPRTQCGCKDARGAIIPAGKTWTSKGCTQSCACVEGNIQCQNFQCPPETYCKDNSEGSSTCTKITLQCPAHTQYTSCLPSCLPSCLDPEGLCKDISPKVPSTCKEGCVCQSGYVLNSDKCVLRAECDCKDAQGALIPAGKTWTSPGCTQSCACMGGAVQCQSSQCPPGTYCKDNEDGNSNCAKITLQCPAHSLFTNCLPPCLPSCLDPDGLCKGASPKVPSTCKEGCICQSGYVLSNNKCLLRNRCGCKDAHGALIPEDKTWVSRGCTQSCVCTGGSIQCLSSQCPPGAYCKDNEDGSSNCARIPPQCPANSHYTDCFPPCPPSCSDPEGHCEASGPRVLSTCREGCLCNPGFVLDRDKCVPRVECGCKDAQGALIPSGKTWTSPGCTQSCACMGGVVQCQSSQCPPGTYCKDNEDGNSNCAKITLQCPTHSNYTDCLPFCLPSCLDPSALCGGTSPKGPSTCKEGCVCQPGYVLDKDKCILKIECGCRDTQGAVIPAGKTWLSTGCIQSCACVEGTIQCQNFQCPPGTYCNHNNNCAKIPLQCPAHSHFTSCLPSCPPSCANLDGSCEQTSPKVPSTCKEGCLCQPGYFLNNGKCVLQTHCDCKDAEGGLVPAGKTWTSKDCTQSCACTGGAVQCQNFQCPLGTYCKDSGDGSSNCTKIHKGAMGDGVLMAGGIRALQCPAHSHFTSCLPSCPPSCSNLDGSCVESNFKAPSVCKKGCICQPGYLLNNDKCVLRIQCGCKDTQGGLIPAGRTWISSDCTKSCSCMGGIIQCRDFQCPPGTYCKESNDSSRTCAKIPLQCPAHSHYTNCLPACSRSCTDLDGHCEGTSPKVPSPCKEGCLCQPGYVVHNHKCVLQIHCGCKDAQGGFVPAGKTWISRGCTQSCACVGGAVQCHNFTCPTGTQCQNSSCSKITVQCPAHSQYTTCLPSCLPSCFDPEGLCGGASPRAPSTCREGCVCEADYVLREDKCVLRTQCGCKDAQGDLIPANKTWLTRGCAQKCTCKGGNIHCWNFKCPLGTECKDSVDGGSNCTKIALQCPAHSHHTYCLPSCIPSCSNVNDRCESTSLQRPSTCIEGCLCHSGFVFSKDKCVPRTQCGCKDSQGTLIPAGKNWITTGCSQRCTCTGGLVQCHDFQCPSGAECQDIEDGNSNCVEITVQCPAHSHYSKCLPPCQPSCSDPDGHCEGTSPEAPSTCEEGCVCEPDYVLSNDKCVPSSECGCKDAHGVLIPESKTWVSRGCTKNCTCKGGTVQCHDFSCPTGSRCLDNNEGNSNCVTYALKCPAHSLYTNCLPSCLPSCSDPEGLCGGTSPEVPSTCKEGCICQSGYVLHKNKCMLRIHCDCKDFQGSLIKTGQTWISSGCSKICTCKGGFFQCQSYKCPSGTQCEESEDGSSNCVSSTMKCPANSLYTHCLPTCLPSCSNPDGRCEGTSHKAPSTCREGCVCQPGYLLNKDTCVHKNQCGCKDIRGNIIPAGNTWISSDCTQSCACTDGVIQCQNFVCPSGSHCQYNEDGSSDCAANKLERCTIFGDPYYLTFDGFTYHFLGRMNYYLIKTVDKLPRGIEPLIMEGRNKISPKGSSTLHEVTTIVYGYKIQLQEELVVLVNDEKVAVPYNPNEHLRVMLRAQRLLLVTDFEMVLDFDGKHSAVISLPTTYRGLTRGLCGNYDRDQSNELMLPSGVLTSNVHVFGNSWEVKAQHAFFRFPRALPEDEERDEEPDLLQSECSQEQTALISSTQACRVLVDPQGPFAACHQIIAPEPFEQRCMLDMCTGWKTKEEEELRCRVLSGYAIICQEAGANMTGWRDHTHCAMTCPANTVYQRCMTPCPASCAKFVTPKVCEGPCVEGCASLPGYIYSDTQSLPVTHCGCTADGIYYKLGDSFVTNDCSQHCTCASQGILLCEPYGCRAGESCMVANFTRGCFQDSPCLQNPCHNDGRCEEQGATFICHCDFGYGGEFCTEPQDITTRKKIEASSLVAILPGVLVMVLVPVLLPRVYVYMATRTTMGRRRMKRKEKKLLRQSRLRLEDADVPEPTFKATEF.

Positions 1-17 are cleaved as a signal peptide; the sequence is MALPVWTLMLLVGAAWG. Residues 18–5310 are Extracellular-facing; sequence QEQVPAWRPN…TTRKKIEASS (5293 aa). MAM domains are found at residues 45-210, 215-374, and 377-542; these read SKCD…TCNQ, QMCT…PCGE, and PQCD…PCRV. Residues Asn-339 and Asn-499 are each glycosylated (N-linked (GlcNAc...) asparagine). Residues 547-1170 are 80 X heptapeptide repeats (approximate) (mucin-like domain); the sequence is EIPSSPLLPP…PTTGVSTTES (624 aa). Disordered regions lie at residues 553 to 579 and 1037 to 1113; these read LLPP…TKAT and TVPP…TVST. The span at 1052 to 1113 shows a compositional bias: low complexity; it reads TEVTTTPPEE…IASEETTVST (62 aa). A TIL 1 domain is found at 1171–1220; sequence CPPNAHIELCACPASCESPKPSCQPPCIPGCVCNPGFLFSNNQCINESSC. Asn-1216, Asn-1239, and Asn-1314 each carry an N-linked (GlcNAc...) asparagine glycan. Positions 1227–1275 constitute a VWFC 1 domain; the sequence is KHYKPGEEWFTPNCTERCRCLPGSLMECQISQCGTHTVCQLKSDQYQCE. Positions 1280-1462 constitute a VWFD 1 domain; that stretch reads ATCLVYGDLH…DKDWVSSRCQ (183 aa). Disulfide bonds link Cys-1282/Cys-1417 and Cys-1304/Cys-1461. The TIL 2 domain maps to 1555–1608; the sequence is CPKNSRYSLCAKPCPETCHPISTTQHCSDKCVEGCECDPGFILSGSECVPSSQC. Residues 1609 to 1664 form the VWFC 2 domain; the sequence is GCTSFQGRYFKLQEQWFNPDCKEICTCESHNHILCKPWKCKAQEACSYKNGVLGCH. The 181-residue stretch at 1669–1849 folds into the VWFD 2 domain; that stretch reads ATCMVSGDPH…ILEASDPGCF (181 aa). Disulfide bonds link Cys-1671-Cys-1809 and Cys-1693-Cys-1848. N-linked (GlcNAc...) asparagine glycosylation is found at Asn-1814, Asn-1908, and Asn-1933. In terms of domain architecture, TIL 3 spans 1941 to 1995; that stretch reads CPPRSSYNPCANSCPATCLTLSTPRDCPTLPCVEGCECQSGHILSGTTCVPLRQC. One can recognise a VWFC 3 domain in the interval 1996-2052; the sequence is GCSDQDGSYHLLGESWYTEKTCTTLCTCSAHSNITCSPTACKANHVCLRQEGLLRCA. Asn-2028, Asn-2111, Asn-2142, and Asn-2332 each carry an N-linked (GlcNAc...) asparagine glycan. Residues 2056–2239 enclose the VWFD 3 domain; the sequence is GECRISEDSQ…KDKSMDPNCQ (184 aa). 2 disulfides stabilise this stretch: Cys-2058/Cys-2200 and Cys-2080/Cys-2238. One can recognise a TIL 4 domain in the interval 2340–2398; that stretch reads CPAHSHYTNCLPSCPPSCLDPDSRCEGSGHKVPATCREGCICQPDYVLLNDKCVLRSHC. Positions 2399–2454 constitute a VWFC 4 domain; that stretch reads GCKDAQGVFIPAGKTWISEDCTQSCTCMKGSMRCWDFQCPPGTYCKNSNDGSSNCV. In terms of domain architecture, TIL 5 spans 2460–2518; sequence CPAHSKFTDCLPPCHPSCSDPDGHCEGISTNAHSNCKEGCVCQPGYVLRNDKCVLRIEC. In terms of domain architecture, VWFC 5 spans 2519-2574; the sequence is GCQHTQGGFIPAGKNWTSRGCSQSCDCMEGVIRCQNFQCPSGTYCQDIEDGTSNCA. Asn-2533 and Asn-2575 each carry an N-linked (GlcNAc...) asparagine glycan. The region spanning 2580-2638 is the TIL 6 domain; the sequence is CPAHSSFTNCLPPCQPSCSDPEGHCGGSTTKAPSACQEGCVCEPDYVVLNNKCVPRIEC. Residues 2639 to 2694 enclose the VWFC 6 domain; that stretch reads GCKDAQGVLIPADKIWINKGCTQTCACVTGTIHCRDFQCPSGTYCKDIKDDASNCT. A glycan (N-linked (GlcNAc...) asparagine) is linked at Asn-2692. Positions 2700 to 2758 constitute a TIL 7 domain; sequence CPDHSLYTHCLPSCLLSCSDPDGLCRGTSPEAPSTCKEGCVCDPDYVLSNDKCVLRIEC. The VWFC 7 domain occupies 2759–2814; it reads GCKDAQGVLIPAGKTWINRGCTQSCSCMGGAIQCQNFKCPSEAYCQDMEDGNSNCT. Asn-2812 is a glycosylation site (N-linked (GlcNAc...) asparagine). The 59-residue stretch at 2820–2878 folds into the TIL 8 domain; it reads CPAHSHYTNCLPTCQPSCSDPDGHCEGSSTKAPSACKEGCVCEPDYVMLNNKCVPRIEC. Residues 2879-2934 form the VWFC 8 domain; that stretch reads GCKDTQGVLIPADKTWINRGCTQSCTCRGGAIQCQKYHCSSGTYCKDMEDDSSSCA. Positions 2940 to 2998 constitute a TIL 9 domain; it reads CPAHSHFTNCLPPCQPSCLDSEGHCEGSTTKAPSACQEGCVCEPDYVVLNNKCVPRIEC. Residues 2999–3054 form the VWFC 9 domain; that stretch reads GCKDAQGVLIPADKTWINRGCTQSCTCKGGAIQCQKFQCPSETYCKDIEDGNSNCT. Asn-3052, Asn-3065, Asn-3144, and Asn-3172 each carry an N-linked (GlcNAc...) asparagine glycan. The TIL 10 domain occupies 3060-3118; it reads CPANSNFTSCLPSCQPSCSNTDVHCEGSSPNTLSSCREGCVCQSGYVLHNDKCILRNQC. The 56-residue stretch at 3119 to 3174 folds into the VWFC 10 domain; the sequence is GCKDAQGALIPEGKTWITSGCTQSCNCTGGAIQCQNFQCPLKTYCKDLKDGSSNCT. Residues 3180-3238 enclose the TIL 11 domain; sequence CPAHSRYTNCLPSCPPLCLDPEGLCEGTSPKVPSTCREGCICQPGYLMHKNKCVLRIFC. The VWFC 11 domain occupies 3239 to 3294; sequence GCKNTQGAFISADKTWISRGCTQSCTCPAGAIHCRNFKCPSGTYCKNGDNGSSNCT. Residues Asn-3288 and Asn-3292 are each glycosylated (N-linked (GlcNAc...) asparagine). The TIL 12 domain maps to 3300–3355; sequence CPTNSQFTDCLPSCVPSCSNRCEVTSPSVPSSCREGCLCNHGFVFSEDKCVPRTQC. The region spanning 3356-3411 is the VWFC 12 domain; the sequence is GCKDARGAIIPAGKTWTSKGCTQSCACVEGNIQCQNFQCPPETYCKDNSEGSSTCT. A TIL 13 domain is found at 3417–3475; the sequence is CPAHTQYTSCLPSCLPSCLDPEGLCKDISPKVPSTCKEGCVCQSGYVLNSDKCVLRAEC. In terms of domain architecture, VWFC 13 spans 3476–3531; that stretch reads DCKDAQGALIPAGKTWTSPGCTQSCACMGGAVQCQSSQCPPGTYCKDNEDGNSNCA. Residues 3537 to 3595 form the TIL 14 domain; sequence CPAHSLFTNCLPPCLPSCLDPDGLCKGASPKVPSTCKEGCICQSGYVLSNNKCLLRNRC. A VWFC 14 domain is found at 3596 to 3651; that stretch reads GCKDAHGALIPEDKTWVSRGCTQSCVCTGGSIQCLSSQCPPGAYCKDNEDGSSNCA. The region spanning 3657–3715 is the TIL 15 domain; the sequence is CPANSHYTDCFPPCPPSCSDPEGHCEASGPRVLSTCREGCLCNPGFVLDRDKCVPRVEC. The VWFC 15 domain occupies 3716–3771; the sequence is GCKDAQGALIPSGKTWTSPGCTQSCACMGGVVQCQSSQCPPGTYCKDNEDGNSNCA. The 59-residue stretch at 3777 to 3835 folds into the TIL 16 domain; that stretch reads CPTHSNYTDCLPFCLPSCLDPSALCGGTSPKGPSTCKEGCVCQPGYVLDKDKCILKIEC. The N-linked (GlcNAc...) asparagine glycan is linked to Asn-3782. A VWFC 16 domain is found at 3836–3891; it reads GCRDTQGAVIPAGKTWLSTGCIQSCACVEGTIQCQNFQCPPGTYCNHNNNCAKIPL. The TIL 17 domain maps to 3893–3951; sequence CPAHSHFTSCLPSCPPSCANLDGSCEQTSPKVPSTCKEGCLCQPGYFLNNGKCVLQTHC. The VWFC 17 domain occupies 3952–4007; sequence DCKDAEGGLVPAGKTWTSKDCTQSCACTGGAVQCQNFQCPLGTYCKDSGDGSSNCT. Asn-4005 carries an N-linked (GlcNAc...) asparagine glycan. The region spanning 4029–4087 is the TIL 18 domain; that stretch reads CPAHSHFTSCLPSCPPSCSNLDGSCVESNFKAPSVCKKGCICQPGYLLNNDKCVLRIQC. Residues 4088–4143 form the VWFC 18 domain; it reads GCKDTQGGLIPAGRTWISSDCTKSCSCMGGIIQCRDFQCPPGTYCKESNDSSRTCA. N-linked (GlcNAc...) asparagine glycosylation occurs at Asn-4136. The region spanning 4149–4207 is the TIL 19 domain; it reads CPAHSHYTNCLPACSRSCTDLDGHCEGTSPKVPSPCKEGCLCQPGYVVHNHKCVLQIHC. The VWFC 19 domain maps to 4208 to 4262; sequence GCKDAQGGFVPAGKTWISRGCTQSCACVGGAVQCHNFTCPTGTQCQNSSCSKITV. Residues Asn-4243 and Asn-4254 are each glycosylated (N-linked (GlcNAc...) asparagine). The 59-residue stretch at 4264–4322 folds into the TIL 20 domain; the sequence is CPAHSQYTTCLPSCLPSCFDPEGLCGGASPRAPSTCREGCVCEADYVLREDKCVLRTQC. The region spanning 4323–4378 is the VWFC 20 domain; that stretch reads GCKDAQGDLIPANKTWLTRGCAQKCTCKGGNIHCWNFKCPLGTECKDSVDGGSNCT. 2 N-linked (GlcNAc...) asparagine glycosylation sites follow: Asn-4335 and Asn-4376. The 59-residue stretch at 4384-4442 folds into the TIL 21 domain; it reads CPAHSHHTYCLPSCIPSCSNVNDRCESTSLQRPSTCIEGCLCHSGFVFSKDKCVPRTQC. One can recognise a VWFC 21 domain in the interval 4443 to 4498; it reads GCKDSQGTLIPAGKNWITTGCSQRCTCTGGLVQCHDFQCPSGAECQDIEDGNSNCV. Residues 4504–4562 enclose the TIL 22 domain; that stretch reads CPAHSHYSKCLPPCQPSCSDPDGHCEGTSPEAPSTCEEGCVCEPDYVLSNDKCVPSSEC. Residues 4563-4618 enclose the VWFC 22 domain; the sequence is GCKDAHGVLIPESKTWVSRGCTKNCTCKGGTVQCHDFSCPTGSRCLDNNEGNSNCV. N-linked (GlcNAc...) asparagine glycosylation is present at Asn-4586. Residues 4624–4682 form the TIL 23 domain; sequence CPAHSLYTNCLPSCLPSCSDPEGLCGGTSPEVPSTCKEGCICQSGYVLHKNKCMLRIHC. The region spanning 4683-4738 is the VWFC 23 domain; the sequence is DCKDFQGSLIKTGQTWISSGCSKICTCKGGFFQCQSYKCPSGTQCEESEDGSSNCV. The 59-residue stretch at 4744-4802 folds into the TIL 24 domain; that stretch reads CPANSLYTHCLPTCLPSCSNPDGRCEGTSHKAPSTCREGCVCQPGYLLNKDTCVHKNQC. A VWFC 24 domain is found at 4803–4858; sequence GCKDIRGNIIPAGNTWISSDCTQSCACTDGVIQCQNFVCPSGSHCQYNEDGSSDCA. Residues 4863 to 5038 enclose the VWFD 4 domain; the sequence is ERCTIFGDPY…SWEVKAQHAF (176 aa). A disulfide bridge connects residues Cys-4865 and Cys-5001. Asn-5136 carries N-linked (GlcNAc...) asparagine glycosylation. The TIL 25 domain occupies 5150–5203; sequence CPANTVYQRCMTPCPASCAKFVTPKVCEGPCVEGCASLPGYIYSDTQSLPVTHC. The region spanning 5204–5258 is the VWFC 25 domain; that stretch reads GCTADGIYYKLGDSFVTNDCSQHCTCASQGILLCEPYGCRAGESCMVANFTRGCF. N-linked (GlcNAc...) asparagine glycosylation is present at Asn-5252. The region spanning 5259–5295 is the EGF-like domain; sequence QDSPCLQNPCHNDGRCEEQGATFICHCDFGYGGEFCT. Cystine bridges form between Cys-5263–Cys-5274, Cys-5268–Cys-5283, and Cys-5285–Cys-5294. Residues 5311 to 5337 form a helical membrane-spanning segment; that stretch reads LVAILPGVLVMVLVPVLLPRVYVYMAT. Residues 5338–5376 are Cytoplasmic-facing; that stretch reads RTTMGRRRMKRKEKKLLRQSRLRLEDADVPEPTFKATEF.

As to quaternary structure, probably forms covalent oligomers. In terms of tissue distribution, in testis, primarily in haploid spermatids.

Its subcellular location is the cell membrane. Functionally, binds in a species-specific manner to the zona pellucida of the egg. May be involved in gamete recognition and/or signaling. The sequence is that of Zonadhesin (Zan) from Mus musculus (Mouse).